The primary structure comprises 101 residues: Small ribosomal subunit protein uS14 (101 aa).

It belongs to the universal ribosomal protein uS14 family. Part of the 30S ribosomal subunit. Contacts proteins S3 and S10.

In terms of biological role, binds 16S rRNA, required for the assembly of 30S particles and may also be responsible for determining the conformation of the 16S rRNA at the A site. This chain is Small ribosomal subunit protein uS14, found in Ralstonia pickettii (strain 12J).